Reading from the N-terminus, the 311-residue chain is HPr kinase/phosphorylase (311 aa).

Active-site residues include H139 and K160. An ATP-binding site is contributed by 154–161 (GQSGVGKS). S161 contributes to the Mg(2+) binding site. D178 (proton acceptor; for phosphorylation activity. Proton donor; for dephosphorylation activity) is an active-site residue. Positions 202-211 (LEIRGIGIID) are important for the catalytic mechanism of both phosphorylation and dephosphorylation. E203 provides a ligand contact to Mg(2+). Residue R244 is part of the active site. The interval 265–270 (PVRPGR) is important for the catalytic mechanism of dephosphorylation.

Belongs to the HPrK/P family. As to quaternary structure, homohexamer. Mg(2+) serves as cofactor.

The catalysed reaction is [HPr protein]-L-serine + ATP = [HPr protein]-O-phospho-L-serine + ADP + H(+). The enzyme catalyses [HPr protein]-O-phospho-L-serine + phosphate + H(+) = [HPr protein]-L-serine + diphosphate. Functionally, catalyzes the ATP- as well as the pyrophosphate-dependent phosphorylation of a specific serine residue in HPr, a phosphocarrier protein of the phosphoenolpyruvate-dependent sugar phosphotransferase system (PTS). HprK/P also catalyzes the pyrophosphate-producing, inorganic phosphate-dependent dephosphorylation (phosphorolysis) of seryl-phosphorylated HPr (P-Ser-HPr). The two antagonistic activities of HprK/P are regulated by several intracellular metabolites, which change their concentration in response to the absence or presence of rapidly metabolisable carbon sources (glucose, fructose, etc.) in the growth medium. Therefore, by controlling the phosphorylation state of HPr, HPrK/P is a sensor enzyme that plays a major role in the regulation of carbon metabolism and sugar transport: it mediates carbon catabolite repression (CCR), and regulates PTS-catalyzed carbohydrate uptake and inducer exclusion. This chain is HPr kinase/phosphorylase, found in Exiguobacterium sp. (strain ATCC BAA-1283 / AT1b).